A 673-amino-acid polypeptide reads, in one-letter code: Putative lipase atg15 (673 aa).

At 1–7 (MPRKRSR) the chain is on the cytoplasmic side. A helical; Signal-anchor for type II membrane protein membrane pass occupies residues 8–28 (FELSIHSLLLSVAVLSGAAYA). The Lumenal segment spans residues 29-673 (SGYYPPSQQV…AVTSAPTPTS (645 aa)). 5 N-linked (GlcNAc...) asparagine glycosylation sites follow: Asn156, Asn191, Asn213, Asn271, and Asn295. Residue Ser311 is the Charge relay system of the active site. N-linked (GlcNAc...) asparagine glycosylation occurs at Asn457.

It belongs to the AB hydrolase superfamily. Lipase family. As to quaternary structure, binds to both phosphatidylinositol (PI) and phosphatidylinositol 3,5-bisphosphate (PIP2).

The protein localises to the endosome. Its subcellular location is the multivesicular body membrane. The protein resides in the prevacuolar compartment membrane. The catalysed reaction is a triacylglycerol + H2O = a diacylglycerol + a fatty acid + H(+). In terms of biological role, lipase which is essential for lysis of subvacuolar cytoplasm to vacuole targeted bodies and intravacuolar autophagic bodies. Involved in the lysis of intravacuolar multivesicular body (MVB) vesicles. The intravacuolar membrane disintegration by atg15 is critical to life span extension. This Penicillium rubens (strain ATCC 28089 / DSM 1075 / NRRL 1951 / Wisconsin 54-1255) (Penicillium chrysogenum) protein is Putative lipase atg15 (atg15).